Reading from the N-terminus, the 513-residue chain is Noroxomaritidine synthase (513 aa).

The helical transmembrane segment at 14-34 threads the bilayer; that stretch reads HYPEILIAIACFLIFSLLLSA. Cys458 serves as a coordination point for heme.

This sequence belongs to the cytochrome P450 family. Heme serves as cofactor.

The protein localises to the membrane. It catalyses the reaction 4'-O-methylnorbelladine + reduced [NADPH--hemoprotein reductase] + O2 = (10bS,4aR)-noroxomaritidine + oxidized [NADPH--hemoprotein reductase] + 2 H2O + H(+). The catalysed reaction is 4'-O-methylnorbelladine + reduced [NADPH--hemoprotein reductase] + O2 = (10bR,4aS)-noroxomaritidine + oxidized [NADPH--hemoprotein reductase] + 2 H2O + H(+). It functions in the pathway alkaloid biosynthesis. In terms of biological role, cytochrome P450 that catalyzes an intramolecular para-para' C-C phenol coupling of 4'-O-methylnorbelladine in alkaloids biosynthesis, including haemanthamine- and crinamine-type alkaloids, promising anticancer agents. Catalyzes the formation of (10bR,4aS)-noroxomaritidine and (10bS,4aR)-noroxomaritidine from 4'-O-methylnorbelladine. Also produces N-demethylnarwedine as a minor product. Involved in the biosynthesis of haemanthamine. Can also use 4'-O-methyl-N-methylnorbelladine, (S)- and (R)-coclaurine as substrates, but not 3'-O-methylnorbelladine, 3',4'-O-dimethylnorbelladine, norbelladine, haemanthamine, (10bS,4aR)- or (10bR,4aS)-noroxomaritidine, isovanillin or tyramine. The sequence is that of Noroxomaritidine synthase from Narcissus aff. pseudonarcissus MK-2014 (Daffodil).